A 130-amino-acid chain; its full sequence is L-ectoine synthase (130 aa).

This sequence belongs to the ectoine synthase family.

It catalyses the reaction (2S)-4-acetamido-2-aminobutanoate = L-ectoine + H2O. It functions in the pathway amine and polyamine biosynthesis; ectoine biosynthesis; L-ectoine from L-aspartate 4-semialdehyde: step 3/3. Its function is as follows. Catalyzes the circularization of gamma-N-acetyl-alpha,gamma-diaminobutyric acid (ADABA) to ectoine (1,4,5,6-tetrahydro-2-methyl-4-pyrimidine carboxylic acid), which is an excellent osmoprotectant. This is L-ectoine synthase from Mycolicibacterium gilvum (strain PYR-GCK) (Mycobacterium gilvum (strain PYR-GCK)).